We begin with the raw amino-acid sequence, 421 residues long: 5-methylthioadenosine/S-adenosylhomocysteine deaminase (421 aa).

The Zn(2+) site is built by His-60 and His-62. Substrate is bound by residues Glu-89 and His-181. His-208 serves as a coordination point for Zn(2+). The substrate site is built by Glu-211 and Asp-296. Asp-296 lines the Zn(2+) pocket.

It belongs to the metallo-dependent hydrolases superfamily. MTA/SAH deaminase family. It depends on Zn(2+) as a cofactor.

The catalysed reaction is S-adenosyl-L-homocysteine + H2O + H(+) = S-inosyl-L-homocysteine + NH4(+). It carries out the reaction S-methyl-5'-thioadenosine + H2O + H(+) = S-methyl-5'-thioinosine + NH4(+). In terms of biological role, catalyzes the deamination of 5-methylthioadenosine and S-adenosyl-L-homocysteine into 5-methylthioinosine and S-inosyl-L-homocysteine, respectively. Is also able to deaminate adenosine. The sequence is that of 5-methylthioadenosine/S-adenosylhomocysteine deaminase from Pyrococcus horikoshii (strain ATCC 700860 / DSM 12428 / JCM 9974 / NBRC 100139 / OT-3).